The sequence spans 165 residues: Acireductone dioxygenase (165 aa).

Fe(2+) is bound by residues H90, H92, E96, and H134. Ni(2+)-binding residues include H90, H92, E96, and H134.

Belongs to the acireductone dioxygenase (ARD) family. In terms of assembly, monomer. The cofactor is Fe(2+). It depends on Ni(2+) as a cofactor.

It carries out the reaction 1,2-dihydroxy-5-(methylsulfanyl)pent-1-en-3-one + O2 = 3-(methylsulfanyl)propanoate + CO + formate + 2 H(+). The enzyme catalyses 1,2-dihydroxy-5-(methylsulfanyl)pent-1-en-3-one + O2 = 4-methylsulfanyl-2-oxobutanoate + formate + 2 H(+). It participates in amino-acid biosynthesis; L-methionine biosynthesis via salvage pathway; L-methionine from S-methyl-5-thio-alpha-D-ribose 1-phosphate: step 5/6. Its function is as follows. Catalyzes 2 different reactions between oxygen and the acireductone 1,2-dihydroxy-3-keto-5-methylthiopentene (DHK-MTPene) depending upon the metal bound in the active site. Fe-containing acireductone dioxygenase (Fe-ARD) produces formate and 2-keto-4-methylthiobutyrate (KMTB), the alpha-ketoacid precursor of methionine in the methionine recycle pathway. Ni-containing acireductone dioxygenase (Ni-ARD) produces methylthiopropionate, carbon monoxide and formate, and does not lie on the methionine recycle pathway. The chain is Acireductone dioxygenase from Rhodopseudomonas palustris (strain TIE-1).